We begin with the raw amino-acid sequence, 124 residues long: Fluoride-specific ion channel FluC (124 aa).

A run of 4 helical transmembrane segments spans residues 5-25 (ILAV…AGTW), 37-57 (ATLA…GLFL), 69-89 (GLIV…LDTL), and 99-119 (LALG…WAGL). 2 residues coordinate Na(+): Gly76 and Thr79.

Belongs to the fluoride channel Fluc/FEX (TC 1.A.43) family.

Its subcellular location is the cell inner membrane. The enzyme catalyses fluoride(in) = fluoride(out). Na(+) is not transported, but it plays an essential structural role and its presence is essential for fluoride channel function. Functionally, fluoride-specific ion channel. Important for reducing fluoride concentration in the cell, thus reducing its toxicity. This is Fluoride-specific ion channel FluC from Pseudomonas syringae pv. tomato (strain ATCC BAA-871 / DC3000).